The following is a 246-amino-acid chain: Proteasome subunit alpha type-6-A (246 aa).

It belongs to the peptidase T1A family. In terms of assembly, component of the 20S core complex of the 26S proteasome. The 26S proteasome is composed of a core protease (CP), known as the 20S proteasome, capped at one or both ends by the 19S regulatory particle (RP/PA700). The 20S proteasome core is composed of 28 subunits that are arranged in four stacked rings, resulting in a barrel-shaped structure. The two end rings are each formed by seven alpha subunits, and the two central rings are each formed by seven beta subunits. The catalytic chamber with the active sites is on the inside of the barrel. In terms of tissue distribution, ubiquitous low levels, higher expression in siliques and flowers.

Its subcellular location is the cytoplasm. The protein resides in the nucleus. Its function is as follows. The proteasome is a multicatalytic proteinase complex which is characterized by its ability to cleave peptides with Arg, Phe, Tyr, Leu, and Glu adjacent to the leaving group at neutral or slightly basic pH. The proteasome has an ATP-dependent proteolytic activity. The protein is Proteasome subunit alpha type-6-A (PAA1) of Arabidopsis thaliana (Mouse-ear cress).